The primary structure comprises 876 residues: MAP7 domain-containing protein 3 (876 aa).

3 disordered regions span residues 30 to 139 (AEER…KFKA), 162 to 200 (GGVM…VDNT), and 402 to 438 (TEAP…IDKR). A compositionally biased stretch (polar residues) spans 39–54 (INSSAGANKRSSSTPD). Positions 58 to 136 (LKNDVKQQLA…KQKQAEDTEK (79 aa)) form a coiled coil. 2 stretches are compositionally biased toward basic and acidic residues: residues 60 to 139 (NDVK…KFKA) and 169 to 196 (KSGK…DMQH). Phosphoserine occurs at positions 417 and 483. Coiled coils occupy residues 549–578 (IQIR…IARK) and 626–658 (SAMM…RRKA). 2 disordered regions span residues 558-683 (QSKN…EIFP) and 742-783 (IQGK…NPNH). Basic and acidic residues-rich tracts occupy residues 559–590 (SKNE…DKVP) and 630–659 (KSRD…RKAS). The segment covering 665–679 (SEDEADDEGESEDSL) has biased composition (acidic residues). Basic residues predominate over residues 750–763 (SAKKPPTRPIRSRK). The span at 771–782 (IRPTQSASSNPN) shows a compositional bias: polar residues.

This sequence belongs to the MAP7 family. In terms of tissue distribution, high expression in lung, skeletal muscle, brain, and kidney, with much weaker expression in spleen, small intestine, liver, and heart.

It localises to the cytoplasm. It is found in the cytoskeleton. Its subcellular location is the spindle. In terms of biological role, promotes the assembly and stability of microtubules. The polypeptide is MAP7 domain-containing protein 3 (Map7d3) (Mus musculus (Mouse)).